Consider the following 167-residue polypeptide: Heme-degrading monooxygenase (167 aa).

The interval 1 to 50 (MKKVFITTGTEHYLRQLMANYTGGNVTLLQNFSQSLLYQESTGEKLFQEG) is important for catalysis. Residues 67–154 (VVVFEYIHLR…NNTQSGFSHE (88 aa)) form the ABM domain.

The protein belongs to the antibiotic biosynthesis monooxygenase family. In terms of assembly, monomer.

It localises to the cytoplasm. Catalyzes the degradation of heme to biliverdin in the presence of a suitable electron donor such as ascorbate, with the subsequent release of iron. Hardly any CO is released by the heme degradation reaction. Binds heme. Allows bacterial pathogens to use the host heme as an iron source. Release of iron from heme may play a crucial role in the pathogenicity of L.monocytogenes. The chain is Heme-degrading monooxygenase from Listeria monocytogenes serovar 1/2a (strain ATCC BAA-679 / EGD-e).